The following is a 568-amino-acid chain: 2-succinyl-5-enolpyruvyl-6-hydroxy-3-cyclohexene-1-carboxylate synthase (568 aa).

It belongs to the TPP enzyme family. MenD subfamily. Homodimer. It depends on Mg(2+) as a cofactor. Mn(2+) serves as cofactor. The cofactor is thiamine diphosphate.

The enzyme catalyses isochorismate + 2-oxoglutarate + H(+) = 5-enolpyruvoyl-6-hydroxy-2-succinyl-cyclohex-3-ene-1-carboxylate + CO2. It functions in the pathway quinol/quinone metabolism; 1,4-dihydroxy-2-naphthoate biosynthesis; 1,4-dihydroxy-2-naphthoate from chorismate: step 2/7. It participates in quinol/quinone metabolism; menaquinone biosynthesis. Its function is as follows. Catalyzes the thiamine diphosphate-dependent decarboxylation of 2-oxoglutarate and the subsequent addition of the resulting succinic semialdehyde-thiamine pyrophosphate anion to isochorismate to yield 2-succinyl-5-enolpyruvyl-6-hydroxy-3-cyclohexene-1-carboxylate (SEPHCHC). This Haemophilus influenzae (strain 86-028NP) protein is 2-succinyl-5-enolpyruvyl-6-hydroxy-3-cyclohexene-1-carboxylate synthase.